A 141-amino-acid chain; its full sequence is HTH-type transcriptional repressor NsrR (141 aa).

In terms of domain architecture, HTH rrf2-type spans 2 to 129; the sequence is QLTSFTDYGL…DNYTLADLVE (128 aa). A DNA-binding region (H-T-H motif) is located at residues 28–51; it reads ISEVTEVYGVSRNHMVKIINQLSR. The [2Fe-2S] cluster site is built by cysteine 91, cysteine 96, and cysteine 102.

[2Fe-2S] cluster is required as a cofactor.

In terms of biological role, nitric oxide-sensitive repressor of genes involved in protecting the cell against nitrosative stress. May require iron for activity. The sequence is that of HTH-type transcriptional repressor NsrR from Salmonella choleraesuis (strain SC-B67).